The primary structure comprises 229 residues: Large ribosomal RNA subunit accumulation protein YCED homolog 2, chloroplastic (229 aa).

A chloroplast-targeting transit peptide spans 1 to 42 (MDVRCLISPNLLNSKIKVSGNTHHLPFSSLSKKHQASSPIQA).

This sequence belongs to the DUF177 domain family.

The protein localises to the plastid. Its subcellular location is the chloroplast. May play a role in synthesis, processing and/or stability of 23S rRNA. In Arabidopsis thaliana (Mouse-ear cress), this protein is Large ribosomal RNA subunit accumulation protein YCED homolog 2, chloroplastic.